Consider the following 179-residue polypeptide: Orotate phosphoribosyltransferase (179 aa).

5-phospho-alpha-D-ribose 1-diphosphate is bound by residues R94, K95, K98, H100, and 120–128 (EDTSTTGNS). Orotate-binding residues include T124 and R152.

It belongs to the purine/pyrimidine phosphoribosyltransferase family. PyrE subfamily. Homodimer. Requires Mg(2+) as cofactor.

It catalyses the reaction orotidine 5'-phosphate + diphosphate = orotate + 5-phospho-alpha-D-ribose 1-diphosphate. It participates in pyrimidine metabolism; UMP biosynthesis via de novo pathway; UMP from orotate: step 1/2. Its function is as follows. Catalyzes the transfer of a ribosyl phosphate group from 5-phosphoribose 1-diphosphate to orotate, leading to the formation of orotidine monophosphate (OMP). The chain is Orotate phosphoribosyltransferase from Mycobacterium avium (strain 104).